Reading from the N-terminus, the 1099-residue chain is Contactin-5 (1099 aa).

Residues Met-1–Ser-18 form the signal peptide. Ig-like C2-type domains are found at residues Pro-99 to Gln-190, Asn-196 to Ser-282, Pro-300 to Gln-385, Pro-390 to Lys-474, Pro-480 to Lys-569, and Pro-571 to Ser-660. A disulfide bond links Cys-123 and Cys-173. 2 N-linked (GlcNAc...) asparagine glycosylation sites follow: Asn-138 and Asn-196. 2 disulfides stabilise this stretch: Cys-217–Cys-269 and Cys-322–Cys-369. Asn-397, Asn-449, and Asn-540 each carry an N-linked (GlcNAc...) asparagine glycan. Disulfide bonds link Cys-411–Cys-458, Cys-503–Cys-551, and Cys-593–Cys-650. Fibronectin type-III domains are found at residues Pro-673–Ala-771, Ala-776–Gly-873, Ala-878–His-972, and Pro-977–Gly-1067. 3 N-linked (GlcNAc...) asparagine glycosylation sites follow: Asn-779, Asn-816, and Asn-931. Residues Tyr-958 to Trp-983 form a disordered region. N-linked (GlcNAc...) asparagine glycosylation occurs at Asn-1002. The GPI-anchor amidated serine moiety is linked to residue Ser-1072. A propeptide spans Ala-1073–Trp-1099 (removed in mature form).

The protein belongs to the immunoglobulin superfamily. Contactin family. As to quaternary structure, interacts with PTPRG. In terms of tissue distribution, specifically expressed in the nervous system. Expressed in cerebrum and cerebellum but at low level in spinal cord. In brain, it is expressed in highly restricted regions at postnatal day 7, such as the auditory pathway, including the cochlear nucleus, superior olive, inferior colliculus, medial geniculate nucleus and auditory cortex. Expressed in the accessory olfactory bulb, glomerular and mitral cell layers in the olfactory bulb, anterior thalamic nuclei, layers II-IV of the cerebral cortex, dentate gyrus of the hippocampus and external granule cells and Purkinje cells of the cerebellum. Also expressed in the piriform cortex, inferior olive and facial nucleus. Weakly or not expressed in other parts of the brain.

The protein localises to the cell membrane. In terms of biological role, contactins mediate cell surface interactions during nervous system development. Has some neurite outgrowth-promoting activity in the cerebral cortical neurons but not in hippocampal neurons. Probably involved in neuronal activity in the auditory system. This is Contactin-5 (Cntn5) from Rattus norvegicus (Rat).